The following is a 347-amino-acid chain: Protein RecA (347 aa).

ATP is bound at residue 64 to 71; the sequence is GPESSGKT.

The protein belongs to the RecA family.

The protein localises to the cytoplasm. Can catalyze the hydrolysis of ATP in the presence of single-stranded DNA, the ATP-dependent uptake of single-stranded DNA by duplex DNA, and the ATP-dependent hybridization of homologous single-stranded DNAs. It interacts with LexA causing its activation and leading to its autocatalytic cleavage. This is Protein RecA from Bartonella henselae (strain ATCC 49882 / DSM 28221 / CCUG 30454 / Houston 1) (Rochalimaea henselae).